A 369-amino-acid polypeptide reads, in one-letter code: Anhydro-N-acetylmuramic acid kinase (369 aa).

An ATP-binding site is contributed by glycine 12 to aspartate 19.

The protein belongs to the anhydro-N-acetylmuramic acid kinase family.

The enzyme catalyses 1,6-anhydro-N-acetyl-beta-muramate + ATP + H2O = N-acetyl-D-muramate 6-phosphate + ADP + H(+). The protein operates within amino-sugar metabolism; 1,6-anhydro-N-acetylmuramate degradation. It participates in cell wall biogenesis; peptidoglycan recycling. In terms of biological role, catalyzes the specific phosphorylation of 1,6-anhydro-N-acetylmuramic acid (anhMurNAc) with the simultaneous cleavage of the 1,6-anhydro ring, generating MurNAc-6-P. Is required for the utilization of anhMurNAc either imported from the medium or derived from its own cell wall murein, and thus plays a role in cell wall recycling. This Escherichia coli (strain SMS-3-5 / SECEC) protein is Anhydro-N-acetylmuramic acid kinase.